Here is a 174-residue protein sequence, read N- to C-terminus: Extracellular cysteine protease (174 aa).

Catalysis depends on residues Cys-24, His-120, and Asn-141.

This sequence belongs to the peptidase C47 family. Proteolytically cleaved.

It localises to the secreted. It is found in the cell wall. With respect to regulation, inhibited by heavy metal ions such as Zn(2+) or Ni(2+), iodoacetamide, N-ethylmaleimide, leupeptin, SDS and E-64. Also inhibited by chloromethylketones TPCK and TLCK and by human plasma inhibitor alpha-2-macroglobulin. Stimulated by L-cysteine. Its function is as follows. Cysteine protease able to cleave elastin, insulin, myoglobin, fibronectin, fibrinogen, HMW-kininogen, alpha-1-protease inhibitor and alpha-1-antitrypsin. Along with other extracellular proteases may contribute to the colonization and infection of human tissues. This chain is Extracellular cysteine protease (ecpA), found in Staphylococcus epidermidis.